Reading from the N-terminus, the 694-residue chain is Ribonuclease R (694 aa).

The region spanning 204 to 525 (RKDLRDLLCF…IVHRLLFHPL (322 aa)) is the RNB domain. One can recognise an S1 motif domain in the interval 571–648 (ATLYKAFIIT…LTQSIEWTLV (78 aa)). Residues 652-694 (TKAKAKRTSKKKKTESVTTKEKKKSPAKKKKGATKTKKGSGKN) form a disordered region. Composition is skewed to basic residues over residues 654–664 (AKAKRTSKKKK) and 672–694 (EKKK…SGKN).

This sequence belongs to the RNR ribonuclease family. RNase R subfamily.

The protein localises to the cytoplasm. It carries out the reaction Exonucleolytic cleavage in the 3'- to 5'-direction to yield nucleoside 5'-phosphates.. Its function is as follows. 3'-5' exoribonuclease that releases 5'-nucleoside monophosphates and is involved in maturation of structured RNAs. The sequence is that of Ribonuclease R from Chlamydia trachomatis serovar D (strain ATCC VR-885 / DSM 19411 / UW-3/Cx).